Consider the following 96-residue polypeptide: Conantokin Rl-C (96 aa).

The first 21 residues, 1–21, serve as a signal peptide directing secretion; sequence MQLYTYLYLLVPLVTFHLILG. The propeptide occupies 22–78; it reads TGTLDHGDALTERRSADATALKPEPVLLQKSSARSTDDNGKDTQMKRIFKKRRNKAR. Residues 36 to 85 form a disordered region; sequence SADATALKPEPVLLQKSSARSTDDNGKDTQMKRIFKKRRNKARGEEELSE. Basic and acidic residues predominate over residues 56 to 66; sequence STDDNGKDTQM. Residue Glu-81 coordinates a divalent metal cation. Residues Glu-81, Glu-82, Glu-85, Glu-89, and Glu-93 each carry the 4-carboxyglutamate modification. Residues Glu-85, Glu-89, and Glu-93 each coordinate a divalent metal cation. Asn-96 carries the asparagine amide modification.

The protein belongs to the conotoxin B superfamily. The cofactor is Ca(2+). Mg(2+) serves as cofactor. As to expression, expressed by the venom duct.

Its subcellular location is the secreted. In terms of biological role, conantokins inhibit N-methyl-D-aspartate (NMDA) receptors. This toxin has antagonist activity on NR2B/GRIN2B (IC(50)=1.4 uM) and NR2A/GRIN2A (IC(50)=2.9 uM) subunits, when tested on rat receptors. In Conus rolani (Cone snail), this protein is Conantokin Rl-C.